The sequence spans 350 residues: tRNA uridine(34) hydroxylase (350 aa).

One can recognise a Rhodanese domain in the interval 146 to 240 (DDPDALFIDM…YARKAREQGL (95 aa)). C200 (cysteine persulfide intermediate) is an active-site residue.

Belongs to the TrhO family.

It carries out the reaction uridine(34) in tRNA + AH2 + O2 = 5-hydroxyuridine(34) in tRNA + A + H2O. In terms of biological role, catalyzes oxygen-dependent 5-hydroxyuridine (ho5U) modification at position 34 in tRNAs, the first step in 5-carboxymethoxyuridine (cmo5U) biosynthesis. May be part of an alternate pathway, which is able to bypass cmo5U biogenesis in a subset of tRNAs under aerobic conditions. In Escherichia coli O17:K52:H18 (strain UMN026 / ExPEC), this protein is tRNA uridine(34) hydroxylase.